The following is a 322-amino-acid chain: MAASRSLVPDRLRLPLCFLGVFVCYFYYGILQEKITRGKYGEGPKQETFTFALTLVFIQCVINAMFAKILIQFFDTARVDRTRTWLYAACSVSYVGAMVSSNSALQFVNYPTQVLGKSCKPIPVMLLGVTLLKKKYPLAKYLCVLLIVAGVALFMYKPKKVVGIEEHTVGFGELLLLLSLTLDGLTGVSQDHMRAHYQTGSNHMMLNINLWSTVLLGAGILFTGELWEFLSFAERYPTIIYNILLFGLTSALGQSFIFMTVVYFGPLTCSIITTTRKFFTILASVILFANPISSMQWVGTVLVFLGLGLDAKFGKGTKKTSH.

8 helical membrane-spanning segments follow: residues 12-32 (LRLP…GILQ), 51-71 (FALT…KILI), 85-105 (WLYA…NSAL), 136-156 (YPLA…LFMY), 168-188 (TVGF…LTGV), 210-230 (LWST…WEFL), 243-263 (ILLF…TVVY), and 285-305 (VILF…LVFL). The Di-lysine motif motif lies at 318–322 (KKTSH).

Belongs to the nucleotide-sugar transporter family. SLC35B subfamily.

The protein resides in the endoplasmic reticulum membrane. The catalysed reaction is ADP(in) + ATP(out) = ADP(out) + ATP(in). The enzyme catalyses UDP(out) + ATP(in) = UDP(in) + ATP(out). It carries out the reaction UTP(out) + ATP(in) = UTP(in) + ATP(out). It catalyses the reaction dATP(out) + ATP(in) = dATP(in) + ATP(out). In terms of biological role, ATP:ADP antiporter that catalyzes the exchange of ATP and ADP across the endoplasmic reticulum (ER) membrane. Imports ATP from the cytosol to the ER lumen and exports ADP in the opposite direction. Regulates ER energy metabolism and protein biogenesis. Appears to be part of a calcium-dependent ER to cytosol low energy response axis, where calcium efflux from ER to the cytosol triggers ATP import into the ER lumen to maintain sufficient ATP supply. Provides ATP to ER chaperone HSPA5 that drives protein folding and trafficking in the ER. Can transport dATP, UTP or UDP in exchange for ATP, but the physiological relevance of this process remains to be established. This is Solute carrier family 35 member B1 (Slc35b1) from Rattus norvegicus (Rat).